A 160-amino-acid polypeptide reads, in one-letter code: SsrA-binding protein (160 aa).

This sequence belongs to the SmpB family.

The protein localises to the cytoplasm. Functionally, required for rescue of stalled ribosomes mediated by trans-translation. Binds to transfer-messenger RNA (tmRNA), required for stable association of tmRNA with ribosomes. tmRNA and SmpB together mimic tRNA shape, replacing the anticodon stem-loop with SmpB. tmRNA is encoded by the ssrA gene; the 2 termini fold to resemble tRNA(Ala) and it encodes a 'tag peptide', a short internal open reading frame. During trans-translation Ala-aminoacylated tmRNA acts like a tRNA, entering the A-site of stalled ribosomes, displacing the stalled mRNA. The ribosome then switches to translate the ORF on the tmRNA; the nascent peptide is terminated with the 'tag peptide' encoded by the tmRNA and targeted for degradation. The ribosome is freed to recommence translation, which seems to be the essential function of trans-translation. The chain is SsrA-binding protein from Proteus mirabilis (strain HI4320).